Reading from the N-terminus, the 184-residue chain is ATP synthase subunit b, chloroplastic (184 aa).

Residues Leu-27–Leu-49 traverse the membrane as a helical segment.

Belongs to the ATPase B chain family. In terms of assembly, F-type ATPases have 2 components, F(1) - the catalytic core - and F(0) - the membrane proton channel. F(1) has five subunits: alpha(3), beta(3), gamma(1), delta(1), epsilon(1). F(0) has four main subunits: a(1), b(1), b'(1) and c(10-14). The alpha and beta chains form an alternating ring which encloses part of the gamma chain. F(1) is attached to F(0) by a central stalk formed by the gamma and epsilon chains, while a peripheral stalk is formed by the delta, b and b' chains.

It localises to the plastid. It is found in the chloroplast thylakoid membrane. F(1)F(0) ATP synthase produces ATP from ADP in the presence of a proton or sodium gradient. F-type ATPases consist of two structural domains, F(1) containing the extramembraneous catalytic core and F(0) containing the membrane proton channel, linked together by a central stalk and a peripheral stalk. During catalysis, ATP synthesis in the catalytic domain of F(1) is coupled via a rotary mechanism of the central stalk subunits to proton translocation. In terms of biological role, component of the F(0) channel, it forms part of the peripheral stalk, linking F(1) to F(0). The protein is ATP synthase subunit b, chloroplastic of Ceratophyllum demersum (Rigid hornwort).